Here is a 256-residue protein sequence, read N- to C-terminus: Small ribosomal subunit protein uS2 (256 aa).

The disordered stretch occupies residues 229–256 (PVDDNGDYGDFDEAIDEYADETDASESE). Acidic residues predominate over residues 232–256 (DNGDYGDFDEAIDEYADETDASESE).

Belongs to the universal ribosomal protein uS2 family.

The polypeptide is Small ribosomal subunit protein uS2 (Picosynechococcus sp. (strain ATCC 27264 / PCC 7002 / PR-6) (Agmenellum quadruplicatum)).